We begin with the raw amino-acid sequence, 380 residues long: MSDRYYRPTFVNVNLDAISSNFKHIEKLHPNKTVIAVIKANGYGLGSVNIAKHLMTSGTDFFAVATLDEAIELRMHGIKAKILVLGVVDPKHIRQASRHRLALTAPDAKWVEDASRYIEAEDKPVWLHIKVDSGMGRIGVQTKQAYDMVVDKVAAVEQFIFEGVFTHFSSADEDNALTERAYDKFLGIINDNKPQYIHCQNSAATLRYDCSECNAVRLGISLYGYYPSEFIRAVSNVKLQPAVQLVSTACFIKHIKSGDTVSYGATYTAQSDEVVATFPIGYADGLPRAMQGYNINLEGTEVPIIGRVCMDQMMARVPDDTLLGAQCIIIDNNADSNQSLERVAQQLGTITYEVLTSLSRRLPKRYYIGDDIEVYNELMK.

The active-site Proton acceptor; specific for D-alanine is the Lys-39. Lys-39 is subject to N6-(pyridoxal phosphate)lysine. Arg-137 lines the substrate pocket. Catalysis depends on Tyr-263, which acts as the Proton acceptor; specific for L-alanine. Met-310 contributes to the substrate binding site.

This sequence belongs to the alanine racemase family. It depends on pyridoxal 5'-phosphate as a cofactor.

It catalyses the reaction L-alanine = D-alanine. Its pathway is amino-acid biosynthesis; D-alanine biosynthesis; D-alanine from L-alanine: step 1/1. Its function is as follows. Catalyzes the interconversion of L-alanine and D-alanine. May also act on other amino acids. In Macrococcus caseolyticus (strain JCSC5402) (Macrococcoides caseolyticum), this protein is Alanine racemase (alr).